Here is a 323-residue protein sequence, read N- to C-terminus: tRNA dimethylallyltransferase (323 aa).

Residue 12–19 (GPTASGKT) participates in ATP binding. A substrate-binding site is contributed by 14–19 (TASGKT). 2 interaction with substrate tRNA regions span residues 37 to 40 (DSAL) and 161 to 165 (QRLVR).

The protein belongs to the IPP transferase family. As to quaternary structure, monomer. Mg(2+) is required as a cofactor.

It carries out the reaction adenosine(37) in tRNA + dimethylallyl diphosphate = N(6)-dimethylallyladenosine(37) in tRNA + diphosphate. Its function is as follows. Catalyzes the transfer of a dimethylallyl group onto the adenine at position 37 in tRNAs that read codons beginning with uridine, leading to the formation of N6-(dimethylallyl)adenosine (i(6)A). The protein is tRNA dimethylallyltransferase of Azotobacter vinelandii (strain DJ / ATCC BAA-1303).